The chain runs to 180 residues: UPF0340 protein LL0489 (180 aa).

Belongs to the UPF0340 family.

This is UPF0340 protein LL0489 (yeiF) from Lactococcus lactis subsp. lactis (strain IL1403) (Streptococcus lactis).